A 282-amino-acid chain; its full sequence is 2-dehydro-3-deoxyphosphooctonate aldolase (282 aa).

It belongs to the KdsA family.

It is found in the cytoplasm. The enzyme catalyses D-arabinose 5-phosphate + phosphoenolpyruvate + H2O = 3-deoxy-alpha-D-manno-2-octulosonate-8-phosphate + phosphate. Its pathway is carbohydrate biosynthesis; 3-deoxy-D-manno-octulosonate biosynthesis; 3-deoxy-D-manno-octulosonate from D-ribulose 5-phosphate: step 2/3. It participates in bacterial outer membrane biogenesis; lipopolysaccharide biosynthesis. In Shewanella amazonensis (strain ATCC BAA-1098 / SB2B), this protein is 2-dehydro-3-deoxyphosphooctonate aldolase.